The primary structure comprises 514 residues: MDSAESELLEEEELPEIKYIDSAEFQNFDNNADQREIQFRWMEAFETKEPRWFRLLDEFITPLSGKRGYCSRIVEKYARVLLHQGFELSQTDGPLRVAAIAASRDVGQAGNLPSVLNNLSEVTRHLNLAQYASTSLATVGQRKFANEVVQKTVNQERLGCFHLFLIGYREGLENLLSNHRHLRNFRYSAKKRHDLLTEHIKNIFQERDSFIQAPEASSFALQTVLENWTFPLQNEQIVQLAHANTLQMRALHVKGDGFYFLNEALNVAIAFNWSSSQEEMEEFYSIFTPQATNPRGKRIFQFWKMISKYDRSNGNAQGFLVTAQRLEEESKSDDIGAGCVTAVELACKIRNQCDQHEDLSKTIMDTITRHPSLGPRMMQLAERCGVGYENEEIIHQICDRFSLHPSEPTWLDYVENLVQTVGRFGSVKETMQKSLKIMFEFLDFDSNRFNERAWSLFEKVLSLTDPSFVVPEWRTRFDWWPKYQRLRAKDGRKMSNMATKTRNDVLEALEELVL.

This is an uncharacterized protein from Caenorhabditis elegans.